The sequence spans 726 residues: Dipeptidyl-peptidase 5 (726 aa).

An N-terminal signal peptide occupies residues 1 to 19; that stretch reads MAAAKWLIASLAFASSGLA. N-linked (GlcNAc...) asparagine glycosylation is found at N96 and N252. The disordered stretch occupies residues 269-291; sequence AEPINKRNGPRTPQAIEGASSSP. Residue S558 is the Charge relay system of the active site. N605 is a glycosylation site (N-linked (GlcNAc...) asparagine). Active-site charge relay system residues include D641 and H673. A glycan (N-linked (GlcNAc...) asparagine) is linked at N699.

It belongs to the peptidase S9C family.

It is found in the secreted. In terms of biological role, extracellular dipeptidyl-peptidase which removes N-terminal dipeptides sequentially from polypeptides having unsubstituted N-termini. Contributes to pathogenicity. This chain is Dipeptidyl-peptidase 5 (DPP5), found in Trichophyton equinum (Horse ringworm fungus).